Consider the following 1357-residue polypeptide: DNA-directed RNA polymerase subunit beta (1357 aa).

The protein belongs to the RNA polymerase beta chain family. In terms of assembly, the RNAP catalytic core consists of 2 alpha, 1 beta, 1 beta' and 1 omega subunit. When a sigma factor is associated with the core the holoenzyme is formed, which can initiate transcription.

The enzyme catalyses RNA(n) + a ribonucleoside 5'-triphosphate = RNA(n+1) + diphosphate. DNA-dependent RNA polymerase catalyzes the transcription of DNA into RNA using the four ribonucleoside triphosphates as substrates. The sequence is that of DNA-directed RNA polymerase subunit beta from Pseudomonas aeruginosa (strain LESB58).